A 115-amino-acid polypeptide reads, in one-letter code: Large ribosomal subunit protein P1 (115 aa).

Positions 56–73 (QAAAAPVPASGGAAAPAE) are enriched in low complexity. Positions 56-115 (QAAAAPVPASGGAAAPAEGDADEADEADEEAEEEAADDGGDDDDDEDDEASGEGLGELFG) are disordered. Acidic residues predominate over residues 74–106 (GDADEADEADEEAEEEAADDGGDDDDDEDDEAS).

This sequence belongs to the eukaryotic ribosomal protein P1/P2 family. As to quaternary structure, part of the 50S ribosomal subunit. Homodimer, it forms part of the ribosomal stalk which helps the ribosome interact with GTP-bound translation factors. Forms a heptameric uL10/P0(P1)2(P1)2(P1)2 complex, where uL10/P0 forms an elongated spine to which the P1 dimers bind in a sequential fashion.

Forms part of the ribosomal stalk, playing a central role in the interaction of the ribosome with GTP-bound translation factors. This chain is Large ribosomal subunit protein P1, found in Haloarcula marismortui (strain ATCC 43049 / DSM 3752 / JCM 8966 / VKM B-1809) (Halobacterium marismortui).